The chain runs to 510 residues: NAD(P)H-quinone oxidoreductase subunit 2 B, chloroplastic (510 aa).

13 helical membrane-spanning segments follow: residues 24–44 (LLLFDGSLIFPECILIFGLIL), 57–77 (LPWFYFISSTSLVMSITALLF), 99–119 (IFQFLILLCSTLCIPLSVEYI), 124–144 (MAITEFLLFVLTATLGGMFLC), 149–169 (LITIFVAPECFSFCSYLLSGY), 183–203 (YLLMGGASSSILVHAFSWLYG), 227–247 (PGISIALLFITVGIGFKLSPA), 295–315 (WHLLLEILAILSMILGNIIAI), 323–343 (MLAYSSIGQIGYVIIGIIVGD), 354–374 (YMLFYISMNLGTFACIVLFGL), 395–415 (ALSLALCLLSLGGLPPLAGFF), 428–448 (GLYSLVLIGLLTSVVSIYYYL), and 484–504 (MIVCVIASTIPGISMNPIIAI).

This sequence belongs to the complex I subunit 2 family. NDH is composed of at least 16 different subunits, 5 of which are encoded in the nucleus.

It is found in the plastid. The protein resides in the chloroplast thylakoid membrane. It catalyses the reaction a plastoquinone + NADH + (n+1) H(+)(in) = a plastoquinol + NAD(+) + n H(+)(out). The enzyme catalyses a plastoquinone + NADPH + (n+1) H(+)(in) = a plastoquinol + NADP(+) + n H(+)(out). NDH shuttles electrons from NAD(P)H:plastoquinone, via FMN and iron-sulfur (Fe-S) centers, to quinones in the photosynthetic chain and possibly in a chloroplast respiratory chain. The immediate electron acceptor for the enzyme in this species is believed to be plastoquinone. Couples the redox reaction to proton translocation, and thus conserves the redox energy in a proton gradient. The polypeptide is NAD(P)H-quinone oxidoreductase subunit 2 B, chloroplastic (Jasminum nudiflorum (Winter jasmine)).